Consider the following 357-residue polypeptide: UPF0283 membrane protein BCAN_A1047 (357 aa).

The tract at residues 1–36 (MSDKTPRKPTAFRLEQPARVSAASEQEEPRRPRAVK) is disordered. The span at 27-36 (EEPRRPRAVK) shows a compositional bias: basic and acidic residues. The next 2 helical transmembrane spans lie at 78 to 98 (ILFG…TEDL) and 109 to 129 (LGWT…AIIL).

Belongs to the UPF0283 family.

It is found in the cell inner membrane. This is UPF0283 membrane protein BCAN_A1047 from Brucella canis (strain ATCC 23365 / NCTC 10854 / RM-666).